Consider the following 359-residue polypeptide: Type-1 angiotensin II receptor (359 aa).

Residues 1–25 (MILNSSTEDGIKRIQDDCPKAGRHN) lie on the Extracellular side of the membrane. The N-linked (GlcNAc...) asparagine glycan is linked to asparagine 4. Positions 15 and 17 each coordinate angiotensin II. 2 cysteine pairs are disulfide-bonded: cysteine 18/cysteine 274 and cysteine 101/cysteine 180. Residues 26–55 (YIFVMIPTLYSIIFVVGIFGNSLVVIVIYF) traverse the membrane as a helical segment. Over 56–61 (YMKLKT) the chain is Cytoplasmic. The chain crosses the membrane as a helical span at residues 62–89 (VASVFLLNLALADLCFLLTLPLWAVYTA). The Extracellular segment spans residues 90–98 (MEYRWPFGN). Residues 99–125 (YLCKIASASVSFNLYASVFLLTCLSID) form a helical membrane-spanning segment. Residues 126 to 141 (RYLAIVHPMKSRLRRT) lie on the Cytoplasmic side of the membrane. Residues 142–165 (MLVAKVTCIIIWLLAGLASLPAII) traverse the membrane as a helical segment. The Extracellular portion of the chain corresponds to 166–190 (HRNVFFIENTNITVCAFHYESQNST). Angiotensin II is bound at residue arginine 167. The N-linked (GlcNAc...) asparagine glycan is linked to asparagine 176. Angiotensin II contacts are provided by phenylalanine 182, histidine 183, and tyrosine 184. An N-linked (GlcNAc...) asparagine glycan is attached at asparagine 188. A helical membrane pass occupies residues 191 to 216 (LPIGLGLTKNILGFLFPFLIILTSYT). Residue lysine 199 participates in angiotensin II binding. The Cytoplasmic segment spans residues 217-239 (LIWKALKKAYEIQKNKPRNDDIF). The chain crosses the membrane as a helical span at residues 240–268 (KIIMAIVLFFFFSWIPHQIFTFLDVLIQL). The Extracellular portion of the chain corresponds to 269–278 (GIIRDCRIAD). The chain crosses the membrane as a helical span at residues 279-304 (IVDTAMPITICIAYFNNCLNPLFYGF). The Cytoplasmic segment spans residues 305-359 (LGKKFKKYFLQLLKYIPPKAKSHSNLSTKMSTLSYRPSDNVSSSTKKPAPCFEVE). Residues 335–350 (STLSYRPSDNVSSSTK) are compositionally biased toward polar residues. Positions 335–359 (STLSYRPSDNVSSSTKKPAPCFEVE) are disordered. Cysteine 355 is lipidated: S-palmitoyl cysteine.

This sequence belongs to the G-protein coupled receptor 1 family. Interacts with MAS1. Interacts with ARRB1. Interacts with FLNA (via filamin repeat 21); increases PKA-mediated phosphorylation of FLNA. C-terminal Ser or Thr residues may be phosphorylated.

The protein resides in the cell membrane. Receptor for angiotensin II, a vasoconstricting peptide, which acts as a key regulator of blood pressure and sodium retention by the kidney. The activated receptor in turn couples to G-alpha proteins G(q) (GNAQ, GNA11, GNA14 or GNA15) and thus activates phospholipase C and increases the cytosolic Ca(2+) concentrations, which in turn triggers cellular responses such as stimulation of protein kinase C. The chain is Type-1 angiotensin II receptor (AGTR1) from Pan troglodytes (Chimpanzee).